The sequence spans 66 residues: Beta-defensin 107A (66 aa).

Residues 1–22 (MKIFFFIFAALILLAQIFQART) form the signal peptide. Disulfide bonds link Cys37–Cys51 and Cys41–Cys60.

The protein belongs to the beta-defensin family.

It localises to the secreted. Its function is as follows. Has antibacterial activity. The protein is Beta-defensin 107A (DEFB107A) of Hylobates lar (Lar gibbon).